We begin with the raw amino-acid sequence, 162 residues long: Phosphopantetheine adenylyltransferase (162 aa).

Ser11 contributes to the substrate binding site. ATP is bound by residues 11–12 (SF) and His19. Residues Lys43, Val76, and Arg90 each contribute to the substrate site. Residues 91-93 (GLR), Glu101, and 126-132 (HLYISSS) contribute to the ATP site.

This sequence belongs to the bacterial CoaD family. As to quaternary structure, homohexamer. The cofactor is Mg(2+).

It localises to the cytoplasm. The enzyme catalyses (R)-4'-phosphopantetheine + ATP + H(+) = 3'-dephospho-CoA + diphosphate. The protein operates within cofactor biosynthesis; coenzyme A biosynthesis; CoA from (R)-pantothenate: step 4/5. Functionally, reversibly transfers an adenylyl group from ATP to 4'-phosphopantetheine, yielding dephospho-CoA (dPCoA) and pyrophosphate. The chain is Phosphopantetheine adenylyltransferase from Streptococcus pneumoniae (strain 70585).